The chain runs to 407 residues: Phosphopentomutase (407 aa).

The Mn(2+) site is built by D10, D306, H311, D347, H348, and H359.

This sequence belongs to the phosphopentomutase family. Mn(2+) serves as cofactor.

Its subcellular location is the cytoplasm. The enzyme catalyses 2-deoxy-alpha-D-ribose 1-phosphate = 2-deoxy-D-ribose 5-phosphate. It catalyses the reaction alpha-D-ribose 1-phosphate = D-ribose 5-phosphate. It participates in carbohydrate degradation; 2-deoxy-D-ribose 1-phosphate degradation; D-glyceraldehyde 3-phosphate and acetaldehyde from 2-deoxy-alpha-D-ribose 1-phosphate: step 1/2. Isomerase that catalyzes the conversion of deoxy-ribose 1-phosphate (dRib-1-P) and ribose 1-phosphate (Rib-1-P) to deoxy-ribose 5-phosphate (dRib-5-P) and ribose 5-phosphate (Rib-5-P), respectively. This is Phosphopentomutase from Enterobacter sp. (strain 638).